A 228-amino-acid chain; its full sequence is Protein JAZ7 (228 aa).

Residues 101-136 (LSPNESTLTIFYMGEVHIFPGISPEKAELIIDLVSK) form the Tify domain. Residues 176–199 (MARRATLARFLEKRKHRLIKARPY) carry the Jas motif. A Nuclear localization signal motif is present at residues 177–184 (ARRATLAR).

This sequence belongs to the TIFY/JAZ family. In terms of assembly, interacts with MYC2 (via N-terminus). JAZ7 competes with MED25 for binding to MYC2. Interacts with MTB1 (via N-terminus).

Its subcellular location is the nucleus. Its function is as follows. Repressor of jasmonate responses. In Solanum lycopersicum (Tomato), this protein is Protein JAZ7.